The primary structure comprises 630 residues: Probable potassium transport system protein Kup (630 aa).

The next 12 helical transmembrane spans lie at 19 to 39 (GLIG…LYAV), 59 to 79 (LLSL…VLLI), 108 to 128 (WIIG…ATIT), 145 to 165 (PGLK…LFFV), 173 to 193 (VGGA…ALGL), 220 to 240 (LLAF…EALY), 255 to 275 (WLFF…ALVI), 284 to 304 (PFFF…ATIA), 345 to 365 (IYVP…VLGF), 374 to 394 (AYGI…AFVY), 405 to 425 (TVLV…SNVL), and 427 to 447 (VFDG…VMTT).

Belongs to the HAK/KUP transporter (TC 2.A.72) family.

It is found in the cell inner membrane. The catalysed reaction is K(+)(in) + H(+)(in) = K(+)(out) + H(+)(out). Functionally, transport of potassium into the cell. Likely operates as a K(+):H(+) symporter. The protein is Probable potassium transport system protein Kup of Acidiphilium cryptum (strain JF-5).